Reading from the N-terminus, the 195-residue chain is AP-4-A phosphorylase (195 aa).

A compositionally biased stretch (basic and acidic residues) spans 1–17 (MSDEDRTDRATEDHTIF). The disordered stretch occupies residues 1–20 (MSDEDRTDRATEDHTIFDRG). The HIT domain occupies 57-166 (PFTEIPQLSD…VPRWGGDANF (110 aa)). The Histidine triad motif signature appears at 151–155 (HLHVH). His-153 acts as the Tele-AMP-histidine intermediate in catalysis.

Homotetramer. Requires a divalent metal cation as cofactor.

It carries out the reaction ADP + ATP + H(+) = P(1),P(4)-bis(5'-adenosyl) tetraphosphate + phosphate. Catabolizes diadenosine 5',5'''-P1,P4-tetraphosphate (Ap4A) into ADP and ATP. The sequence is that of AP-4-A phosphorylase from Mycobacterium tuberculosis (strain CDC 1551 / Oshkosh).